A 475-amino-acid chain; its full sequence is Ribulose bisphosphate carboxylase large chain (475 aa).

Residues 1 to 2 constitute a propeptide that is removed on maturation; it reads MS. At Pro-3 the chain carries N-acetylproline. Lys-14 bears the N6,N6,N6-trimethyllysine mark. The substrate site is built by Asn-123 and Thr-173. The Proton acceptor role is filled by Lys-175. Lys-177 is a binding site for substrate. The Mg(2+) site is built by Lys-201, Asp-203, and Glu-204. The residue at position 201 (Lys-201) is an N6-carboxylysine. Catalysis depends on His-294, which acts as the Proton acceptor. Positions 295, 327, and 379 each coordinate substrate.

This sequence belongs to the RuBisCO large chain family. Type I subfamily. In terms of assembly, heterohexadecamer of 8 large chains and 8 small chains; disulfide-linked. The disulfide link is formed within the large subunit homodimers. The cofactor is Mg(2+). Post-translationally, the disulfide bond which can form in the large chain dimeric partners within the hexadecamer appears to be associated with oxidative stress and protein turnover.

The protein localises to the plastid. Its subcellular location is the chloroplast. The enzyme catalyses 2 (2R)-3-phosphoglycerate + 2 H(+) = D-ribulose 1,5-bisphosphate + CO2 + H2O. The catalysed reaction is D-ribulose 1,5-bisphosphate + O2 = 2-phosphoglycolate + (2R)-3-phosphoglycerate + 2 H(+). Functionally, ruBisCO catalyzes two reactions: the carboxylation of D-ribulose 1,5-bisphosphate, the primary event in carbon dioxide fixation, as well as the oxidative fragmentation of the pentose substrate in the photorespiration process. Both reactions occur simultaneously and in competition at the same active site. This chain is Ribulose bisphosphate carboxylase large chain, found in Stellaria media (Common chickweed).